Consider the following 303-residue polypeptide: Methionyl-tRNA formyltransferase (303 aa).

108 to 111 (SDLP) lines the (6S)-5,6,7,8-tetrahydrofolate pocket.

Belongs to the Fmt family.

The catalysed reaction is L-methionyl-tRNA(fMet) + (6R)-10-formyltetrahydrofolate = N-formyl-L-methionyl-tRNA(fMet) + (6S)-5,6,7,8-tetrahydrofolate + H(+). In terms of biological role, attaches a formyl group to the free amino group of methionyl-tRNA(fMet). The formyl group appears to play a dual role in the initiator identity of N-formylmethionyl-tRNA by promoting its recognition by IF2 and preventing the misappropriation of this tRNA by the elongation apparatus. This Rickettsia felis (strain ATCC VR-1525 / URRWXCal2) (Rickettsia azadi) protein is Methionyl-tRNA formyltransferase.